The following is a 260-amino-acid chain: Taurine import ATP-binding protein TauB (260 aa).

The ABC transporter domain maps to 6–235 (AQQVSVVYAS…RYAHGEPMRS (230 aa)). 40 to 47 (GASGCGKS) provides a ligand contact to ATP.

This sequence belongs to the ABC transporter superfamily. Taurine importer (TC 3.A.1.17.1) family. As to quaternary structure, the complex is composed of two ATP-binding proteins (TauB), two transmembrane proteins (TauC) and a solute-binding protein (TauA).

The protein localises to the cell inner membrane. It carries out the reaction taurine(out) + ATP + H2O = taurine(in) + ADP + phosphate + H(+). Its function is as follows. Part of the ABC transporter complex TauABC involved in taurine import. Responsible for energy coupling to the transport system. The sequence is that of Taurine import ATP-binding protein TauB from Burkholderia pseudomallei (strain 1710b).